The chain runs to 235 residues: Uridylate kinase (235 aa).

9 to 12 (KLSG) contacts ATP. An involved in allosteric activation by GTP region spans residues 17-22 (GDQGYG). Glycine 51 contacts UMP. Residues glycine 52 and arginine 56 each coordinate ATP. Residues aspartate 71 and 132 to 139 (CGNPFFTT) contribute to the UMP site. ATP contacts are provided by threonine 159, tyrosine 165, and aspartate 168.

Belongs to the UMP kinase family. In terms of assembly, homohexamer.

It is found in the cytoplasm. The enzyme catalyses UMP + ATP = UDP + ADP. The protein operates within pyrimidine metabolism; CTP biosynthesis via de novo pathway; UDP from UMP (UMPK route): step 1/1. Allosterically activated by GTP. Inhibited by UTP. In terms of biological role, catalyzes the reversible phosphorylation of UMP to UDP. The polypeptide is Uridylate kinase (Synechococcus sp. (strain WH7803)).